A 377-amino-acid chain; its full sequence is Chaperone protein DnaJ (377 aa).

Residues 5 to 70 (DYYEVLGVSR…DKKAAYDQFG (66 aa)) enclose the J domain. The segment at 133–211 (GLTKELRIPT…CHGDGRVEKS (79 aa)) adopts a CR-type zinc-finger fold. 8 residues coordinate Zn(2+): cysteine 146, cysteine 149, cysteine 163, cysteine 166, cysteine 185, cysteine 188, cysteine 199, and cysteine 202. 4 CXXCXGXG motif repeats span residues 146-153 (CDLCEGSG), 163-170 (CGTCHGQG), 185-192 (CPTCHGRG), and 199-206 (CTKCHGDG).

Belongs to the DnaJ family. Homodimer. It depends on Zn(2+) as a cofactor.

It is found in the cytoplasm. Its function is as follows. Participates actively in the response to hyperosmotic and heat shock by preventing the aggregation of stress-denatured proteins and by disaggregating proteins, also in an autonomous, DnaK-independent fashion. Unfolded proteins bind initially to DnaJ; upon interaction with the DnaJ-bound protein, DnaK hydrolyzes its bound ATP, resulting in the formation of a stable complex. GrpE releases ADP from DnaK; ATP binding to DnaK triggers the release of the substrate protein, thus completing the reaction cycle. Several rounds of ATP-dependent interactions between DnaJ, DnaK and GrpE are required for fully efficient folding. Also involved, together with DnaK and GrpE, in the DNA replication of plasmids through activation of initiation proteins. The polypeptide is Chaperone protein DnaJ (Shewanella baltica (strain OS223)).